Consider the following 105-residue polypeptide: MSIIKLEKGDNNNAAVLEKKTAALKNKSPKYKVLLHNDPVNSMEYITIALREVVPQLSEQDAIAIMLEAHNNGVGLVIVCDLEPAEFYSESLKSKGISSSIEKDE.

This sequence belongs to the ClpS family. As to quaternary structure, binds to the N-terminal domain of the chaperone ClpA.

Its function is as follows. Involved in the modulation of the specificity of the ClpAP-mediated ATP-dependent protein degradation. The protein is ATP-dependent Clp protease adapter protein ClpS of Prochlorococcus marinus (strain MIT 9515).